The primary structure comprises 97 residues: Class II hydrophobin NC2 (97 aa).

The first 17 residues, 1–17 (MQFTIATVLSLLTITLA), serve as a signal peptide directing secretion. 4 disulfides stabilise this stretch: Cys-31–Cys-79, Cys-40–Cys-70, Cys-41–Cys-53, and Cys-80–Cys-91. A glycan (N-linked (GlcNAc...) asparagine) is linked at Asn-62.

Belongs to the cerato-ulmin hydrophobin family. As to quaternary structure, homotrimer. Further self-assembles to form highly ordered films at water-air interfaces through intermolecular interactions.

The protein resides in the secreted. Its subcellular location is the cell wall. Functionally, aerial growth, conidiation, and dispersal of filamentous fungi in the environment rely upon a capability of their secreting small amphipathic proteins called hydrophobins (HPBs) with low sequence identity. Class I can self-assemble into an outermost layer of rodlet bundles on aerial cell surfaces, conferring cellular hydrophobicity that supports fungal growth, development and dispersal; whereas Class II form highly ordered films at water-air interfaces through intermolecular interactions but contribute nothing to the rodlet structure. NC2 is a class II hydrophobin that has the potential to adsorb to the hydrophobic interface at the hydrophobic-hydrophilic interface at very high rate but the predicted self-assembly NC2 film possesses a lower flexural rigidity than other class II hydrophobins such as HFBII from Hypocrea jecorina (also known as Trichoderma reesei). This is Class II hydrophobin NC2 from Neurospora crassa (strain ATCC 24698 / 74-OR23-1A / CBS 708.71 / DSM 1257 / FGSC 987).